The sequence spans 313 residues: Probable 5-dehydro-4-deoxyglucarate dehydratase 1 (313 aa).

The protein belongs to the DapA family.

The enzyme catalyses 5-dehydro-4-deoxy-D-glucarate + H(+) = 2,5-dioxopentanoate + CO2 + H2O. The protein operates within carbohydrate acid metabolism; D-glucarate degradation; 2,5-dioxopentanoate from D-glucarate: step 2/2. The sequence is that of Probable 5-dehydro-4-deoxyglucarate dehydratase 1 from Streptomyces avermitilis (strain ATCC 31267 / DSM 46492 / JCM 5070 / NBRC 14893 / NCIMB 12804 / NRRL 8165 / MA-4680).